The sequence spans 424 residues: MLDLVAAFIALTTLLTYVNYRFIRLPPTIGVMATALVFSLIVQGLSELGYPILEVEMQEIIRRIDFSEVLMTWFLPALLFAGALHVDLSDLRSYKWPIGLLATAGVLIATFVIGGLAYYTFPLFGWQVDFIYCLLFGALISPTDPIAVLGILKSAGAPKPLATTIVGESLFNDGTAVVVFAIILGILQLGEAPTVSATAILFVQEAIGGVVFGAVLGYGVFVMMRGIDQYQVEVMLTLALVIGGAALAARLHVSAPIAMVVAGLIIGNHGRHYAMSDETRRYVDKFWELIDEILNALLFALIGLELLLLPFSWLHVAAAFALGGAVLVSRLLTVGPAILVLRRFRGANRQVPAGTIRILVWGGLRGGVSVALALSLPLGPERDLILSLTYIVVLVSILLQGLSIGPLVRRIYAGQPLEKSEGAH.

12 consecutive transmembrane segments (helical) span residues 3-23 (DLVAAFIALTTLLTYVNYRFI), 25-45 (LPPTIGVMATALVFSLIVQGL), 66-86 (FSEVLMTWFLPALLFAGALHV), 96-116 (WPIGLLATAGVLIATFVIGGL), 130-152 (FIYCLLFGALISPTDPIAVLGIL), 170-190 (LFNDGTAVVVFAIILGILQLG), 200-220 (ILFVQEAIGGVVFGAVLGYGV), 246-266 (ALAARLHVSAPIAMVVAGLII), 296-316 (ALLFALIGLELLLLPFSWLHV), 320-340 (FALGGAVLVSRLLTVGPAILV), 358-378 (ILVWGGLRGGVSVALALSLPL), and 384-404 (LILSLTYIVVLVSILLQGLSI).

The protein belongs to the monovalent cation:proton antiporter 1 (CPA1) transporter (TC 2.A.36) family.

The protein resides in the cell inner membrane. With respect to regulation, inhibited by amiloride. Na(+)/H(+) antiporter that extrudes sodium in exchange for external protons. Also has weak Li(+)/H(+) antiport activity. The sequence is that of Na(+)/H(+) antiporter NhaP (nhaP) from Pseudomonas aeruginosa (strain ATCC 15692 / DSM 22644 / CIP 104116 / JCM 14847 / LMG 12228 / 1C / PRS 101 / PAO1).